The primary structure comprises 72 residues: Translation initiation factor IF-1 (72 aa).

In terms of domain architecture, S1-like spans 1–72 (MAKQDVIELE…SRGRITYRYK (72 aa)).

This sequence belongs to the IF-1 family. As to quaternary structure, component of the 30S ribosomal translation pre-initiation complex which assembles on the 30S ribosome in the order IF-2 and IF-3, IF-1 and N-formylmethionyl-tRNA(fMet); mRNA recruitment can occur at any time during PIC assembly.

It is found in the cytoplasm. In terms of biological role, one of the essential components for the initiation of protein synthesis. Stabilizes the binding of IF-2 and IF-3 on the 30S subunit to which N-formylmethionyl-tRNA(fMet) subsequently binds. Helps modulate mRNA selection, yielding the 30S pre-initiation complex (PIC). Upon addition of the 50S ribosomal subunit IF-1, IF-2 and IF-3 are released leaving the mature 70S translation initiation complex. This is Translation initiation factor IF-1 from Staphylococcus epidermidis (strain ATCC 35984 / DSM 28319 / BCRC 17069 / CCUG 31568 / BM 3577 / RP62A).